The chain runs to 670 residues: Sodium/glucose cotransporter 2 (670 aa).

The Extracellular portion of the chain corresponds to 1-20 (MEGHVEEGSELGEQKVLIDN). Residues 21–42 (PADILVIAAYFLLVIGVGLWSM) form a helical membrane-spanning segment. The Cytoplasmic segment spans residues 43-61 (FRTNRGTVGGYFLAGRSMV). A helical transmembrane segment spans residues 62 to 83 (WWPVGASLFASNIGSGHFVGLA). Residues Ala-71 and Ile-74 each coordinate Na(+). Over 84–91 (GTGAASGL) the chain is Extracellular. The helical transmembrane segment at 92-112 (AVAGFEWNALFVVLLLGWLFV) threads the bilayer. Topologically, residues 113-134 (PVYLTAGVITMPQYLRKRFGGR) are cytoplasmic. Residues 135 to 164 (RIRLYLSVLSLFLYIFTKISVDMFSGAVFI) traverse the membrane as a helical segment. Residues 165-171 (QQALGWN) lie on the Extracellular side of the membrane. 2 consecutive transmembrane segments (helical) span residues 172-193 (IYASVIALLGITMIYTVTGGLA) and 194-215 (ALMYTDTVQTFVILAGAFILTG). The Extracellular segment spans residues 216 to 273 (YAFHEVGGYSGLFDKYLGAVTSLTVSKDPAVGNISSTCYQPRPDSYHLLRDPVTGGLP). An N-linked (GlcNAc...) asparagine glycan is attached at Asn-248. Intrachain disulfides connect Cys-253-Cys-509, Cys-343-Cys-349, Cys-353-Cys-359, and Cys-515-Cys-520. Residues 274-293 (WPALLLGLTIVSGWHWCSDQ) form a helical membrane-spanning segment. At 294–307 (VIVQRCLAGKNLTH) the chain is on the cytoplasmic side. The helical transmembrane segment at 308 to 329 (IKAGCILCGYLKLMPMFLMVMP) threads the bilayer. Residues 330-373 (GMISRILYPDEVACVVPEVCKRVCGTEVGCSNIAYPRLVVKLMP) are Extracellular-facing. The chain crosses the membrane as a helical span at residues 374-404 (NGLRGLMLAVMLAALMSSLASIFNSSSTLFT). Ala-387, Ser-390, and Ser-391 together coordinate Na(+). Topologically, residues 405 to 422 (MDIYTRLRPRAGDRELLL) are cytoplasmic. Residues 423–444 (VGRLWVVFIVAVSVAWLPVVQA) traverse the membrane as a helical segment. Residues 445–449 (AQGGQ) lie on the Extracellular side of the membrane. Residues 450-475 (LFDYIQSVSSYLAPPVSAVFVLALFV) form a helical membrane-spanning segment. Topologically, residues 476-480 (PRVNE) are cytoplasmic. Residues 481-503 (KGAFWGLIGGLLMGLARLIPEFF) form a helical membrane-spanning segment. Residues 504-521 (FGTGSCVRPSACPAIFCR) are Extracellular-facing. A helical transmembrane segment spans residues 522–545 (VHYLYFAIILFFCSGFLTLAISRC). Residues 546 to 649 (TAPIPQKHLH…DISEDPSWAR (104 aa)) lie on the Cytoplasmic side of the membrane. The helical transmembrane segment at 650 to 668 (VVNLNALLMMTVAVFLWGF) threads the bilayer. The Extracellular portion of the chain corresponds to 669-670 (YA).

It belongs to the sodium:solute symporter (SSF) (TC 2.A.21) family. In terms of assembly, forms a heterodimer (via TM13) with PDZK1IP1 (via N-terminal transmembrane helix); this interaction enhances SLC5A2 transporter activity. Post-translationally, glycosylated at a single site. As to expression, kidney, in proximal tubule S1 segments.

The protein localises to the apical cell membrane. It catalyses the reaction D-glucose(out) + Na(+)(out) = D-glucose(in) + Na(+)(in). With respect to regulation, enhanced by the interaction with PDZK1IP1/MAP17. Functionally, electrogenic Na(+)-coupled sugar symporter that actively transports D-glucose at the plasma membrane, with a Na(+) to sugar coupling ratio of 1:1. Transporter activity is driven by a transmembrane Na(+) electrochemical gradient set by the Na(+)/K(+) pump. Unlike SLC5A1/SGLT1, requires the auxiliary protein PDZK1IP1/MAP17 for full transporter activity. Has a primary role in D-glucose reabsorption from glomerular filtrate across the brush border of the early proximal tubules of the kidney. The chain is Sodium/glucose cotransporter 2 (Slc5a2) from Rattus norvegicus (Rat).